We begin with the raw amino-acid sequence, 398 residues long: Stearoyl-[acyl-carrier-protein] 9-desaturase, chloroplastic (398 aa).

Residues 1 to 34 constitute a chloroplast transit peptide; that stretch reads MALKLNPLASQPYNFPSSARPPISTFRSPKFLCL. Glutamate 140, glutamate 178, histidine 181, glutamate 231, glutamate 264, and histidine 267 together coordinate Fe cation.

Belongs to the fatty acid desaturase type 2 family. In terms of assembly, homodimer. Requires Fe(2+) as cofactor.

Its subcellular location is the plastid. It localises to the chloroplast. The enzyme catalyses octadecanoyl-[ACP] + 2 reduced [2Fe-2S]-[ferredoxin] + O2 + 2 H(+) = (9Z)-octadecenoyl-[ACP] + 2 oxidized [2Fe-2S]-[ferredoxin] + 2 H2O. The protein operates within lipid metabolism; fatty acid metabolism. Converts stearoyl-ACP to oleoyl-ACP by introduction of a cis double bond between carbons 9 and 10 of the acyl chain. The sequence is that of Stearoyl-[acyl-carrier-protein] 9-desaturase, chloroplastic from Brassica napus (Rape).